A 547-amino-acid polypeptide reads, in one-letter code: Chaperonin GroEL (547 aa).

ATP contacts are provided by residues 30 to 33 (TLGP), lysine 51, 87 to 91 (DGTTT), glycine 415, 480 to 482 (NAA), and aspartate 496. Residues 525–547 (KPDDKPAMPPMGGGMGGMGGMDF) are disordered. Over residues 535 to 547 (MGGGMGGMGGMDF) the composition is skewed to gly residues.

It belongs to the chaperonin (HSP60) family. Forms a cylinder of 14 subunits composed of two heptameric rings stacked back-to-back. Interacts with the co-chaperonin GroES.

It is found in the cytoplasm. It carries out the reaction ATP + H2O + a folded polypeptide = ADP + phosphate + an unfolded polypeptide.. Functionally, together with its co-chaperonin GroES, plays an essential role in assisting protein folding. The GroEL-GroES system forms a nano-cage that allows encapsulation of the non-native substrate proteins and provides a physical environment optimized to promote and accelerate protein folding. The chain is Chaperonin GroEL from Novosphingobium aromaticivorans (strain ATCC 700278 / DSM 12444 / CCUG 56034 / CIP 105152 / NBRC 16084 / F199).